Consider the following 426-residue polypeptide: Serine--tRNA ligase (426 aa).

Residue 233–235 coordinates L-serine; sequence TSE. 264-266 contacts ATP; that stretch reads RAE. Glu287 serves as a coordination point for L-serine. 351-354 contributes to the ATP binding site; it reads EISS. Ser387 is an L-serine binding site.

The protein belongs to the class-II aminoacyl-tRNA synthetase family. Type-1 seryl-tRNA synthetase subfamily. Homodimer. The tRNA molecule binds across the dimer.

The protein localises to the cytoplasm. The catalysed reaction is tRNA(Ser) + L-serine + ATP = L-seryl-tRNA(Ser) + AMP + diphosphate + H(+). It carries out the reaction tRNA(Sec) + L-serine + ATP = L-seryl-tRNA(Sec) + AMP + diphosphate + H(+). The protein operates within aminoacyl-tRNA biosynthesis; selenocysteinyl-tRNA(Sec) biosynthesis; L-seryl-tRNA(Sec) from L-serine and tRNA(Sec): step 1/1. Catalyzes the attachment of serine to tRNA(Ser). Is also able to aminoacylate tRNA(Sec) with serine, to form the misacylated tRNA L-seryl-tRNA(Sec), which will be further converted into selenocysteinyl-tRNA(Sec). The chain is Serine--tRNA ligase from Stenotrophomonas maltophilia (strain R551-3).